Consider the following 796-residue polypeptide: MAWDMCNQDSVWTDIECAALVGEDQPLCPDLPELDLSELDVNDLDTDSFLGGLKWCSDQSEIISNQYNNEPSNIFEKIDEENEANLLAVLTETLDSLPVDEDGLPSFDALTDGDVTTENEASPSSMPDGTPPPQEAEEPSLLKKLLLAPANTQLSYNECSGLSTQNHANHNHRIRTNPAVVKTENSWSNKAKSICQQQKPQRRPCSELLKYLTTNDDPPHTKPTETRNSSRDKCTSKKKAHTQSQSQHLQAKPTSLSLPLTPESPNDPKGSPFENKTIERTLSVELSGTAGLTPPTTPPHKANQDNPFRASPKLKPPCKTVVPPPSKKTRYSESSGTHGNNSTKKGPEQSELYAQLSKTSALGGGHEERKARRPSLRLFGDHDYCQSINSKAEILINISQELHDSRQLDSKDAASDWQRQMCSSTDSDQCYLTETSEASRQVSPGSARKQLQDQEIRAELNKHFGHPSQAVFDDEADKTSELRDSDFSNEQFSKLPMFINSGLAMDGLFDDSEDESDKLNSPWDGTQSYSLFDVSPSCSSFNSPCRDSVSPPKSLFSQRPQRMRSRSRSFSQHRSCSRSPYSRSRSRSPGSRSSSRSCYYSESGHCRHRTHRNSPLCARSRSRSPYSRRPRYDSYEEYQHERLKREEYRREYEKRESERAKQRERQRQKAIEERRVIYVGKIRPDTTRTELRDRFEVFGEIEECTVNLRDDGDSYGFITYRYTCDAFAALENGYTLRRSNETDFELYFCGRKQFFKSNYADLDSNSDDFDPASTKSKYDSLDFDSLLKEAQRSLRR.

Lys77 is subject to N6-acetyllysine. The tract at residues 98-138 (PVDEDGLPSFDALTDGDVTTENEASPSSMPDGTPPPQEAEE) is disordered. Residues 114 to 127 (DVTTENEASPSSMP) show a composition bias toward polar residues. Residues 142–146 (LKKLL) carry the LXXLL motif motif. Lys144 is modified (N6-acetyllysine). Thr176 is modified (phosphothreonine; by AMPK). Lys182 bears the N6-acetyllysine mark. The tract at residues 211–274 (YLTTNDDPPH…PNDPKGSPFE (64 aa)) is disordered. The segment covering 217 to 235 (DPPHTKPTETRNSSRDKCT) has biased composition (basic and acidic residues). The span at 242–258 (TQSQSQHLQAKPTSLSL) shows a compositional bias: polar residues. N6-acetyllysine is present on residues Lys252, Lys269, Lys276, and Lys319. Residues 288–349 (GTAGLTPPTT…NNSTKKGPEQ (62 aa)) form a disordered region. Positions 291 to 337 (GLTPPTTPPHKANQDNPFRASPKLKPPCKTVVPPPSKKTRYSESSGT) are interaction with PPARG. Residues 332-344 (SESSGTHGNNSTK) are compositionally biased toward polar residues. N6-acetyllysine is present on residues Lys345, Lys411, and Lys449. The tract at residues 348 to 796 (EQSELYAQLS…LKEAQRSLRR (449 aa)) is mediates interaction with RNF34. The disordered stretch occupies residues 463 to 487 (HFGHPSQAVFDDEADKTSELRDSDF). Residues 477–486 (DKTSELRDSD) are compositionally biased toward basic and acidic residues. Ser537 bears the Phosphoserine; by AMPK mark. Disordered regions lie at residues 541–637 (FNSP…SYEE) and 648–667 (YRRE…ERQR). Over residues 568–603 (RSFSQHRSCSRSPYSRSRSRSPGSRSSSRSCYYSES) the composition is skewed to low complexity. Residues 620-629 (SRSRSPYSRR) show a composition bias toward basic residues. The RRM domain occupies 675–751 (RVIYVGKIRP…TDFELYFCGR (77 aa)). N6-acetyllysine is present on residues Lys756 and Lys777.

As to quaternary structure, homooligomer. Interacts with MYBBP1A; inhibits MYBBP1A transcriptional activation. Interacts with PRDM16, LPIN1 and PML. Interacts (via LXXLL motif) with RORA and RORC (via AF-2 motif); activates RORA and RORC transcriptional activation. Interacts with LRPPRC. Interacts with FOXO1. Interacts with NR5A2. Phosphorylation by AMPK in skeletal muscle increases activation of its own promoter. Phosphorylated by CLK2. In terms of processing, heavily acetylated by KAT2A/GCN5 under conditions of high nutrients, leading to inactivation of PPARGC1A. Deacetylated by SIRT1 in low nutrients/high NAD conditions, leading to its activation. Post-translationally, ubiquitinated. Ubiquitination by RNF34 induces proteasomal degradation.

Its subcellular location is the nucleus. The protein localises to the PML body. Functionally, transcriptional coactivator for steroid receptors and nuclear receptors. Greatly increases the transcriptional activity of PPARG and thyroid hormone receptor on the uncoupling protein promoter. Can regulate key mitochondrial genes that contribute to the program of adaptive thermogenesis. Plays an essential role in metabolic reprogramming in response to dietary availability through coordination of the expression of a wide array of genes involved in glucose and fatty acid metabolism. Acts as a key regulator of gluconeogenesis: stimulates hepatic gluconeogenesis by increasing the expression of gluconeogenic enzymes, and acting together with FOXO1 to promote the fasting gluconeogenic program. Induces the expression of PERM1 in the skeletal muscle in an ESRRA-dependent manner. Also involved in the integration of the circadian rhythms and energy metabolism. Required for oscillatory expression of clock genes, such as BMAL1 and NR1D1, through the coactivation of RORA and RORC, and metabolic genes, such as PDK4 and PEPCK. The sequence is that of Peroxisome proliferator-activated receptor gamma coactivator 1-alpha (PPARGC1A) from Sus scrofa (Pig).